Consider the following 257-residue polypeptide: Baramicin A1 (257 aa).

Residues 1-19 form the signal peptide; sequence MKSFGLIALAICGVICVAA. Positions 20–21 are excised as a propeptide; it reads EP. Glutamine 22 carries the pyrrolidone carboxylic acid modification. The segment at 95–122 is disordered; that stretch reads GPNFSAKNLGPNGAKSVGIPQRARRSPQ. N-linked (GlcNAc...) asparagine glycosylation is present at asparagine 97. The propeptide occupies 118-121; the sequence is RRSP. Position 122 is a pyrrolidone carboxylic acid (glutamine 122). The propeptide occupies 145–148; the sequence is RRSP. Glutamine 149 is subject to Pyrrolidone carboxylic acid. Positions 172-175 are excised as a propeptide; sequence RRSP. Glutamine 176 is modified (pyrrolidone carboxylic acid). Positions 199-204 are excised as a propeptide; sequence RRGIND. N-linked (GlcNAc...) asparagine glycosylation is present at asparagine 225.

In terms of processing, proteolytically cleaved. In terms of tissue distribution, hemolymph (at protein level).

It localises to the secreted. Its function is as follows. Secreted immune-induced peptides induced by Toll signaling. Has a significant role in resistance to infection by the entomopathogenic fungus B.bassiana R444 and weak antifungal activity against M.rileyi PHP1705. In adult males, activity appears to be important for neuromuscular processes that mediate correct wing posture upon Toll activation. In Drosophila melanogaster (Fruit fly), this protein is Baramicin A1.